A 537-amino-acid chain; its full sequence is Frizzled-4 (537 aa).

A signal peptide spans 1 to 36; that stretch reads MAWRGAGPSVPGAPGGVGLSLGLLLQLLLLLGPARG. Over 37 to 212 the chain is Extracellular; the sequence is FGDEEERRCD…KCGYDAGLYS (176 aa). Residues 40-161 enclose the FZ domain; that stretch reads EEERRCDPIR…NDHNHMCMEG (122 aa). Cystine bridges form between C45–C106, C53–C99, C90–C128, C117–C158, C121–C145, C181–C200, C204–C282, and C302–C377. N59 is a glycosylation site (N-linked (GlcNAc...) asparagine). N144 carries an N-linked (GlcNAc...) asparagine glycan. A helical transmembrane segment spans residues 213–243; sequence RSAKEFTDIWMAVWASLCFISTAFTVLTFLI. At 244–249 the chain is on the cytoplasmic side; sequence DSSRFS. A helical transmembrane segment spans residues 250 to 275; the sequence is YPERPIIFLSMCYNIYSIAYIVRLTV. At 276–299 the chain is on the extracellular side; the sequence is GRERISCDFEEAAEPVLIQEGLKN. Residues 300–333 form a helical membrane-spanning segment; sequence TGCAIIFLLMYFFGMASSIWWVILTLTWFLAAGL. Over 334 to 336 the chain is Cytoplasmic; it reads KWG. A helical membrane pass occupies residues 337–365; sequence HEAIEMHSSYFHIAAWAIPAVKTIVILIM. Residues 366-383 lie on the Extracellular side of the membrane; sequence RLVDADELTGLCYVGNQN. Residues 384-418 traverse the membrane as a helical segment; the sequence is LDALTGFVVAPLFTYLVIGTLFIAAGLVALFKIRS. Residues 419–431 lie on the Cytoplasmic side of the membrane; the sequence is NLQKDGTKTDKLE. Residues 432–460 form a helical membrane-spanning segment; it reads RLMVKIGVFSVLYTVPATCVIACYFYEIS. At 461 to 473 the chain is on the extracellular side; sequence NWALFRYSADDSN. Residues 474–495 form a helical membrane-spanning segment; sequence MAVEMLKIFMSLLVGITSGMWI. Over 496-537 the chain is Cytoplasmic; the sequence is WSAKTLHTWQKCSNRLVNSGKVKREKRGNGWVKPGKGSETVV. Residues 499–504 carry the Lys-Thr-X-X-X-Trp motif, mediates interaction with the PDZ domain of Dvl family members motif; sequence KTLHTW. Positions 535-537 match the PDZ-binding motif; that stretch reads TVV.

This sequence belongs to the G-protein coupled receptor Fz/Smo family. As to quaternary structure, interacts with MAGI3 and NDP. Component of a complex, at least composed of TSPAN12, FZD4 and norrin (NDP). Interacts (via FZ domain) with TSKU; TSKU competes with WNT2B for binding to FZD4, inhibiting Wnt signaling and repressing peripheral eye development. Interacts with glypican GPC3. Post-translationally, ubiquitinated by ZNRF3, leading to its degradation by the proteasome. In terms of tissue distribution, almost ubiquitous. Largely expressed in adult heart, skeletal muscle, ovary, and fetal kidney. Moderate amounts in adult liver, kidney, pancreas, spleen, and fetal lung, and small amounts in placenta, adult lung, prostate, testis, colon, fetal brain and liver.

Its subcellular location is the cell membrane. Functionally, receptor for Wnt proteins. Most frizzled receptors are coupled to the beta-catenin (CTNNB1) canonical signaling pathway, which leads to the activation of disheveled proteins, inhibition of GSK-3 kinase, nuclear accumulation of beta-catenin (CTNNB1) and activation of Wnt target genes. Plays a critical role in retinal vascularization by acting as a receptor for Wnt proteins and norrin (NDP). In retina, it can be activated by Wnt protein-binding and also by Wnt-independent signaling via binding of norrin (NDP), promoting in both cases beta-catenin (CTNNB1) accumulation and stimulation of LEF/TCF-mediated transcriptional programs. A second signaling pathway involving PKC and calcium fluxes has been seen for some family members, but it is not yet clear if it represents a distinct pathway or if it can be integrated in the canonical pathway, as PKC seems to be required for Wnt-mediated inactivation of GSK-3 kinase. Both pathways seem to involve interactions with G-proteins. May be involved in transduction and intercellular transmission of polarity information during tissue morphogenesis and/or in differentiated tissues. This Homo sapiens (Human) protein is Frizzled-4 (FZD4).